The sequence spans 485 residues: NADH-quinone oxidoreductase subunit N (485 aa).

Transmembrane regions (helical) follow at residues 8–28, 35–55, 71–91, 105–125, 127–147, 159–179, 203–223, 235–255, 271–291, 297–317, 326–346, 373–393, 408–430, and 455–475; these read LIAL…MLSI, FLNA…LWFV, GFAM…CTFA, FYLL…ANHL, ALFL…GYAF, YTIL…LVYA, LLAG…LAPF, PAPV…GVVM, VVLG…ALSQ, LLGY…IALQ, VGVY…VVSL, AAVM…LGFI, WWLV…RVAV, and IVVL…QPLI.

The protein belongs to the complex I subunit 2 family. In terms of assembly, NDH-1 is composed of 13 different subunits. Subunits NuoA, H, J, K, L, M, N constitute the membrane sector of the complex.

The protein localises to the cell inner membrane. The enzyme catalyses a quinone + NADH + 5 H(+)(in) = a quinol + NAD(+) + 4 H(+)(out). Its function is as follows. NDH-1 shuttles electrons from NADH, via FMN and iron-sulfur (Fe-S) centers, to quinones in the respiratory chain. The immediate electron acceptor for the enzyme in this species is believed to be ubiquinone. Couples the redox reaction to proton translocation (for every two electrons transferred, four hydrogen ions are translocated across the cytoplasmic membrane), and thus conserves the redox energy in a proton gradient. This chain is NADH-quinone oxidoreductase subunit N, found in Salmonella paratyphi C (strain RKS4594).